The following is a 91-amino-acid chain: Essential MCU regulator, mitochondrial (91 aa).

A helical membrane pass occupies residues 45–65; it reads VIPFGLLGVVLTVIPGLLIGA.

It belongs to the SMDT1/EMRE family.

It is found in the mitochondrion inner membrane. In terms of biological role, essential regulatory subunit of the mitochondrial calcium uniporter (mcu) channel, a protein that mediates calcium uptake into mitochondria. The chain is Essential MCU regulator, mitochondrial from Aedes aegypti (Yellowfever mosquito).